A 519-amino-acid chain; its full sequence is Bifunctional pantoate ligase/cytidylate kinase (519 aa).

Residues 1–282 (MNLTILRTKT…CGNTRLIDHG (282 aa)) form a pantoate--beta-alanine ligase region. 30-37 (MGGLHQGH) is a binding site for ATP. Histidine 37 acts as the Proton donor in catalysis. A (R)-pantoate-binding site is contributed by glutamine 66. Glutamine 66 provides a ligand contact to beta-alanine. ATP is bound at residue 155–158 (GEKD). Glutamine 161 is a (R)-pantoate binding site. 192–195 (CSSR) contributes to the ATP binding site. A cytidylate kinase region spans residues 283 to 519 (FLMKRNPIVA…PQEVWPTNAT (237 aa)).

This sequence in the N-terminal section; belongs to the pantothenate synthetase family. The protein in the C-terminal section; belongs to the cytidylate kinase family. Type 1 subfamily.

It is found in the cytoplasm. The catalysed reaction is (R)-pantoate + beta-alanine + ATP = (R)-pantothenate + AMP + diphosphate + H(+). It catalyses the reaction CMP + ATP = CDP + ADP. The enzyme catalyses dCMP + ATP = dCDP + ADP. The protein operates within cofactor biosynthesis; (R)-pantothenate biosynthesis; (R)-pantothenate from (R)-pantoate and beta-alanine: step 1/1. Catalyzes the condensation of pantoate with beta-alanine in an ATP-dependent reaction via a pantoyl-adenylate intermediate. Its function is as follows. Catalyzes the transfer of a phosphate group from ATP to either CMP or dCMP to form CDP or dCDP and ADP, respectively. The chain is Bifunctional pantoate ligase/cytidylate kinase from Prochlorococcus marinus (strain SARG / CCMP1375 / SS120).